Consider the following 864-residue polypeptide: N-alpha-acetyltransferase 16, NatA auxiliary subunit (864 aa).

TPR repeat units lie at residues 46–79 (GETL…DVKS), 80–113 (HVCW…DKDN), 148–184 (RASW…PPNK), 224–257 (LLVE…NAEN), 374–407 (LWVQ…TPTL), 409–441 (ELFY…DTAD), and 485–518 (MWFQ…FFEI). A disordered region spans residues 603-638 (QKKAKLEEERKHAERERQQKNQKKKRDEEEEEASGL). Over residues 606–621 (AKLEEERKHAERERQQ) the composition is skewed to basic and acidic residues.

As to quaternary structure, component of the N-terminal acetyltransferase A (NatA) complex composed of NAA10 and NAA16.

Functionally, auxillary subunit of the N-terminal acetyltransferase A (NatA) complex which displays alpha (N-terminal) acetyltransferase activity. In Homo sapiens (Human), this protein is N-alpha-acetyltransferase 16, NatA auxiliary subunit (NAA16).